The following is an 853-amino-acid chain: Auxin response factor 23 (853 aa).

Residues proline 118–histidine 141 are disordered. Residues phenylalanine 149–methionine 251 constitute a DNA-binding region (TF-B3). Disordered stretches follow at residues glutamate 422–methionine 484 and proline 647–serine 723. Residues proline 425 to lysine 455 show a composition bias toward polar residues. Basic and acidic residues predominate over residues glutamate 672–aspartate 686. Over residues proline 706–serine 723 the composition is skewed to polar residues. The 85-residue stretch at arginine 725 to glutamate 809 folds into the PB1 domain. The segment at proline 815 to cysteine 853 is disordered. Polar residues predominate over residues leucine 843 to cysteine 853.

The protein belongs to the ARF family. As to quaternary structure, homodimers and heterodimers. Interacts with CRL1. In terms of tissue distribution, expressed in roots, culms, leaves and young panicles.

Its subcellular location is the nucleus. Functionally, auxin response factors (ARFs) are transcriptional factors that bind specifically to the DNA sequence 5'-TGTCTC-3' found in the auxin-responsive promoter elements (AuxREs). This Oryza sativa subsp. japonica (Rice) protein is Auxin response factor 23 (ARF23).